Reading from the N-terminus, the 246-residue chain is Large ribosomal subunit protein uL30 (246 aa).

The protein belongs to the universal ribosomal protein uL30 family.

Functionally, binds to G-rich structures in 28S rRNA and in mRNAs. Plays a regulatory role in the translation apparatus; inhibits cell-free translation of mRNAs. The chain is Large ribosomal subunit protein uL30 (rpl7) from Dictyostelium discoideum (Social amoeba).